The sequence spans 111 residues: Nucleoid-associated protein PFL_1905 (111 aa).

2 disordered regions span residues 1–20 (MKGGMAGLMKQAQQMQEKMA) and 88–111 (SNSQEKMSGMTAGMQLPPGMKLPF).

Belongs to the YbaB/EbfC family. In terms of assembly, homodimer.

Its subcellular location is the cytoplasm. It localises to the nucleoid. In terms of biological role, binds to DNA and alters its conformation. May be involved in regulation of gene expression, nucleoid organization and DNA protection. In Pseudomonas fluorescens (strain ATCC BAA-477 / NRRL B-23932 / Pf-5), this protein is Nucleoid-associated protein PFL_1905.